The sequence spans 61 residues: MKKEFLDLYMILSVLAGVIGIFYLTTPYQDRPDKSLSYYMTLSVVTGILALIYLQNHHKKN.

2 helical membrane-spanning segments follow: residues 5 to 25 (FLDL…FYLT) and 35 to 55 (SLSY…IYLQ).

The protein resides in the membrane. This chain is Transmembrane protein 300R, found in Invertebrate iridescent virus 6 (IIV-6).